Consider the following 173-residue polypeptide: Large ribosomal subunit protein uL10 (173 aa).

The protein belongs to the universal ribosomal protein uL10 family. As to quaternary structure, part of the ribosomal stalk of the 50S ribosomal subunit. The N-terminus interacts with L11 and the large rRNA to form the base of the stalk. The C-terminus forms an elongated spine to which L12 dimers bind in a sequential fashion forming a multimeric L10(L12)X complex.

Forms part of the ribosomal stalk, playing a central role in the interaction of the ribosome with GTP-bound translation factors. This Chlorobium phaeobacteroides (strain BS1) protein is Large ribosomal subunit protein uL10.